A 127-amino-acid chain; its full sequence is Small ribosomal subunit protein uS13 (127 aa).

Residues G95 to K127 form a disordered region.

This sequence belongs to the universal ribosomal protein uS13 family. As to quaternary structure, part of the 30S ribosomal subunit. Forms a loose heterodimer with protein S19. Forms two bridges to the 50S subunit in the 70S ribosome.

Functionally, located at the top of the head of the 30S subunit, it contacts several helices of the 16S rRNA. In the 70S ribosome it contacts the 23S rRNA (bridge B1a) and protein L5 of the 50S subunit (bridge B1b), connecting the 2 subunits; these bridges are implicated in subunit movement. Contacts the tRNAs in the A and P-sites. The polypeptide is Small ribosomal subunit protein uS13 (Herpetosiphon aurantiacus (strain ATCC 23779 / DSM 785 / 114-95)).